Here is a 107-residue protein sequence, read N- to C-terminus: Alpha-elapitoxin-Al2a (107 aa).

Positions 1–21 (MKTLLLTLVVVTIVCLDLGDS) are cleaved as a signal peptide. 5 disulfide bridges follow: Cys-24/Cys-41, Cys-34/Cys-62, Cys-47/Cys-51, Cys-66/Cys-77, and Cys-78/Cys-83.

It belongs to the three-finger toxin family. Long-chain subfamily. Type II alpha-neurotoxin sub-subfamily. In terms of tissue distribution, expressed by the venom gland.

It localises to the secreted. Functionally, binds with high affinity to muscular (alpha-1/CHRNA1) and neuronal (alpha-7/CHRNA7) nicotinic acetylcholine receptor (nAChR) and inhibits acetylcholine from binding to the receptor, thereby impairing neuromuscular and neuronal transmission. This chain is Alpha-elapitoxin-Al2a, found in Austrelaps labialis (Pygmy copperhead).